Reading from the N-terminus, the 590-residue chain is MRTHYADKVDSSLIDQTITLCGWVHRRRDHGGLIFIDLRDREGLVQVVCNPTESTVFKVAESLRNEYVIKVTGKVHKRPEGTVNPHIPSGEVEIAASDITLLNKSKPLPFNIDEYQEVSEEVRLKFRYLDLRRPEVAQRLKMRSYIIREIRRFLDERGFLDIETPMLTKSTPEGARDYLVPSRTHPGQFFALPQSPQIFKEILMVAGFDRYYQIVRCFRDEDLRADRQPEFTQLDLEMSFVEEKDIQQLMETMIRHLFSTFLNVPLPDPFPRITYDEAIKTYGTDRPDLRNPLTLVDVTDLMKSVEFKVFKEPANNPHGRIAVLRLPKGAELSRKAIDDYTQFVGIYGAKGLAYIKVENIDNGTGGLHSPILKFLPENVIAEILKRTQAQSGDILFFGADKAKIVNESLGALRDRLCADLNLYEGQWKPVWVVDFPMFDREDVGDWQALHHPFTALQETDPEKVIANPGDVLSRAYDIVLNGSEIGGGSIRINDIGMQYAVLKVLGISKEMAEAQFGHLLMALQFGSPPLGGIAFGLDRLVAIMTGASSIRDVIAFPKTQTAQCPLTNAPAQVETLQLETLGLKVSKHRK.

Glu173 is an L-aspartate binding site. Residues Gln197–Lys200 are aspartate. Arg219 contributes to the L-aspartate binding site. ATP is bound by residues Arg219–Glu221 and Gln228. His450 is an L-aspartate binding site. Glu484 is a binding site for ATP. Arg491 is a binding site for L-aspartate. Gly536–Arg539 is an ATP binding site.

This sequence belongs to the class-II aminoacyl-tRNA synthetase family. Type 1 subfamily. As to quaternary structure, homodimer.

The protein localises to the cytoplasm. The enzyme catalyses tRNA(Asx) + L-aspartate + ATP = L-aspartyl-tRNA(Asx) + AMP + diphosphate. Functionally, aspartyl-tRNA synthetase with relaxed tRNA specificity since it is able to aspartylate not only its cognate tRNA(Asp) but also tRNA(Asn). Reaction proceeds in two steps: L-aspartate is first activated by ATP to form Asp-AMP and then transferred to the acceptor end of tRNA(Asp/Asn). The protein is Aspartate--tRNA(Asp/Asn) ligase of Coxiella burnetii (strain Dugway 5J108-111).